The chain runs to 130 residues: uncharacterized protein (130 aa).

Residues 21–43 form a helical membrane-spanning segment; it reads VAVCTVAAEVLAIFTLVCTRVFI.

It is found in the membrane. This is an uncharacterized protein from Saccharomyces cerevisiae (strain ATCC 204508 / S288c) (Baker's yeast).